We begin with the raw amino-acid sequence, 274 residues long: Phloretin hydrolase (274 aa).

Residues H123, E154, H251, and E255 each coordinate Zn(2+).

The protein belongs to the DAPG/phloretin hydrolase family. In terms of assembly, homodimer. Zn(2+) serves as cofactor.

Its subcellular location is the cytoplasm. The enzyme catalyses phloretin + H2O = phloretate + 1,3,5-trihydroxybenzene + H(+). Functionally, catalyzes the hydrolytic C-C cleavage of phloretin to phloroglucinol and 3-(4-hydroxyphenyl)propionic acid during flavonoid degradation. Also hydrolyzes other C-acylated phenols. This chain is Phloretin hydrolase (phy), found in Eubacterium ramulus.